Consider the following 452-residue polypeptide: Lamina-associated polypeptide 2, isoform beta (452 aa).

The tract at residues 1–409 (MPEFLEDPSV…KSEKTKKGRS (409 aa)) is nucleoplasmic. One can recognise an LEM-like domain in the interval 5-48 (LEDPSVLTKDKLKSELVANNVTLPAGEQRKDVYVQLYLQHLTAR). Disordered regions lie at residues 48–113 (RNRP…DVTE) and 149–264 (REQG…VEPS). Positions 49–107 (NRPPLAAGANSKGPPDFSSDEEREPTPVLGSGASVGRGRGAVGRKATKKTDKPRPEDKD) are linker. Residues S66 and S67 each carry the phosphoserine modification. T74 is subject to Phosphothreonine. S82 bears the Phosphoserine mark. Residues R85 and R87 each carry the omega-N-methylarginine modification. Residues 96-105 (KKTDKPRPED) are compositionally biased toward basic and acidic residues. Residues 108 to 152 (DLDVTELSNEELLEQLVRYGVNPGPIVGTTRKLYEKKLLKLREQG) form the LEM domain. The segment at 137 to 242 (TRKLYEKKLL…TSGSSKGGPL (106 aa)) is NAKAP95-binding N. A compositionally biased stretch (polar residues) spans 154–177 (ESRSSTPLPTVSSSAENTRQNGSN). A phosphoserine mark is found at S155 and S158. Position 159 is a phosphothreonine (T159). S165, S167, S176, S179, and S183 each carry phosphoserine. Over residues 178–202 (DSDRYSDNDEDSKIELKLEKREPLK) the composition is skewed to basic and acidic residues. An N6-acetyllysine modification is found at K206. A binds lamins B region spans residues 298–370 (TGNFKHASSI…SCRRPIKGAA (73 aa)). The segment at 299-373 (GNFKHASSIL…RPIKGAAGRP (75 aa)) is NAKAP95-binding C. S305, S306, and S361 each carry phosphoserine. K388 is subject to N6-acetyllysine. Residues 410–430 (VPMWIKMLLFALVAGFLFLVY) form a helical; Signal-anchor for type II membrane protein membrane-spanning segment. Residues 431-452 (QAMETNQGNPFTNFLQDTKISN) lie on the Lumenal side of the membrane.

Belongs to the LEM family. Interacts with LMNB1, LMNB2, BANF1, AKAP8L, GMCL and chromosomes. Post-translationally, mitosis-specific phosphorylation specifically abolishes its binding to lamin B and chromosomes.

The protein localises to the nucleus inner membrane. It localises to the chromosome. Functionally, binds directly to lamin B1 and chromosomes in a mitotic phosphorylation-regulated manner. May play an important role in nuclear envelope reassembly at the end of mitosis and/or anchoring of the nuclear lamina and interphase chromosomes to the nuclear envelope. The chain is Lamina-associated polypeptide 2, isoform beta (Tmpo) from Rattus norvegicus (Rat).